The chain runs to 246 residues: Probable 2-phosphosulfolactate phosphatase (246 aa).

Belongs to the ComB family. Requires Mg(2+) as cofactor.

It carries out the reaction (2R)-O-phospho-3-sulfolactate + H2O = (2R)-3-sulfolactate + phosphate. The polypeptide is Probable 2-phosphosulfolactate phosphatase (Nostoc punctiforme (strain ATCC 29133 / PCC 73102)).